We begin with the raw amino-acid sequence, 106 residues long: Nucleoid-associated protein Abu_0429 (106 aa).

It belongs to the YbaB/EbfC family. As to quaternary structure, homodimer.

It is found in the cytoplasm. It localises to the nucleoid. Its function is as follows. Binds to DNA and alters its conformation. May be involved in regulation of gene expression, nucleoid organization and DNA protection. The polypeptide is Nucleoid-associated protein Abu_0429 (Aliarcobacter butzleri (strain RM4018) (Arcobacter butzleri)).